We begin with the raw amino-acid sequence, 275 residues long: Transcription factor Ovo-like 2 (275 aa).

A disordered region spans residues 15-101 (SVRSWDELPD…GHLATKQRPV (87 aa)). Composition is skewed to basic and acidic residues over residues 18-29 (SWDELPDEKRAD) and 39-49 (LLHDPPEDCRS). Over residues 56-76 (GSGSSSAGEPGGAESSSSPHA) the composition is skewed to low complexity. Over residues 80–89 (ETPEPGDAEG) the composition is skewed to acidic residues. 4 C2H2-type zinc fingers span residues 119 to 141 (HSCD…LKCH), 147 to 169 (HLCT…VRTH), 175 to 198 (YKCN…KKIH), and 214 to 237 (YVCE…NSAH). A Phosphoserine modification is found at Ser-269.

The protein belongs to the krueppel C2H2-type zinc-finger protein family. In terms of assembly, interacts (via zinc-finger domains) with CEBPA (via bZIP domain); the interaction inhibits the transcription factor activity of CEBPA and is required to repress adipogenesis. Expressed in testis, ovary, heart and skeletal muscle. Expressed in the cornea, but absent from the corneal endothelium.

Its subcellular location is the nucleus. Zinc-finger transcription repressor factor. Plays a critical role in maintaining the identity of epithelial lineages by suppressing epithelial-to mesenchymal transition (EMT) mainly through the repression of ZEB1, an EMT inducer. Positively regulates neuronal differentiation. Suppresses cell cycling and terminal differentiation of keratinocytes by directly repressing MYC and NOTCH1. Important for the correct development of primordial germ cells in embryos. Plays dual functions in thermogenesis and adipogenesis to maintain energy balance. Essential for brown/beige adipose tissue-mediated thermogenesis, is necessary for the development of brown adipocytes. In white adipose tissues, limits adipogenesis by blocking CEBPA binding to its transcriptional targets and inhibiting its transcription factor activity. In Homo sapiens (Human), this protein is Transcription factor Ovo-like 2.